The chain runs to 536 residues: L-aspartate oxidase 2 (536 aa).

FAD is bound by residues 22 to 25 (EGLA) and 51 to 58 (SSYWAQGG). R284 acts as the Proton donor/acceptor in catalysis. FAD is bound by residues E369 and 385–386 (SL).

It belongs to the FAD-dependent oxidoreductase 2 family. NadB subfamily. Requires FAD as cofactor.

It is found in the cytoplasm. The catalysed reaction is L-aspartate + O2 = iminosuccinate + H2O2. The protein operates within cofactor biosynthesis; NAD(+) biosynthesis; iminoaspartate from L-aspartate (oxidase route): step 1/1. Its function is as follows. Catalyzes the oxidation of L-aspartate to iminoaspartate, the first step in the de novo biosynthesis of NAD(+). The chain is L-aspartate oxidase 2 (nadB2) from Ralstonia nicotianae (strain ATCC BAA-1114 / GMI1000) (Ralstonia solanacearum).